A 514-amino-acid polypeptide reads, in one-letter code: 2-isopropylmalate synthase (514 aa).

The Pyruvate carboxyltransferase domain occupies isoleucine 8–phenylalanine 270. Residues aspartate 17, histidine 205, histidine 207, and asparagine 241 each coordinate Mn(2+). The regulatory domain stretch occupies residues arginine 394–isoleucine 514.

It belongs to the alpha-IPM synthase/homocitrate synthase family. LeuA type 1 subfamily. Homodimer. Mn(2+) is required as a cofactor.

Its subcellular location is the cytoplasm. It carries out the reaction 3-methyl-2-oxobutanoate + acetyl-CoA + H2O = (2S)-2-isopropylmalate + CoA + H(+). It participates in amino-acid biosynthesis; L-leucine biosynthesis; L-leucine from 3-methyl-2-oxobutanoate: step 1/4. Catalyzes the condensation of the acetyl group of acetyl-CoA with 3-methyl-2-oxobutanoate (2-ketoisovalerate) to form 3-carboxy-3-hydroxy-4-methylpentanoate (2-isopropylmalate). The chain is 2-isopropylmalate synthase from Nitratidesulfovibrio vulgaris (strain DSM 19637 / Miyazaki F) (Desulfovibrio vulgaris).